The primary structure comprises 163 residues: Transcription elongation factor GreB (163 aa).

The protein belongs to the GreA/GreB family. GreB subfamily.

Functionally, necessary for efficient RNA polymerase transcription elongation past template-encoded arresting sites. The arresting sites in DNA have the property of trapping a certain fraction of elongating RNA polymerases that pass through, resulting in locked ternary complexes. Cleavage of the nascent transcript by cleavage factors such as GreA or GreB allows the resumption of elongation from the new 3'terminus. GreB releases sequences of up to 9 nucleotides in length. This chain is Transcription elongation factor GreB, found in Vibrio parahaemolyticus serotype O3:K6 (strain RIMD 2210633).